Consider the following 252-residue polypeptide: Imidazole glycerol phosphate synthase subunit HisF (252 aa).

Active-site residues include Asp11 and Asp130.

Belongs to the HisA/HisF family. Heterodimer of HisH and HisF.

Its subcellular location is the cytoplasm. It catalyses the reaction 5-[(5-phospho-1-deoxy-D-ribulos-1-ylimino)methylamino]-1-(5-phospho-beta-D-ribosyl)imidazole-4-carboxamide + L-glutamine = D-erythro-1-(imidazol-4-yl)glycerol 3-phosphate + 5-amino-1-(5-phospho-beta-D-ribosyl)imidazole-4-carboxamide + L-glutamate + H(+). Its pathway is amino-acid biosynthesis; L-histidine biosynthesis; L-histidine from 5-phospho-alpha-D-ribose 1-diphosphate: step 5/9. Functionally, IGPS catalyzes the conversion of PRFAR and glutamine to IGP, AICAR and glutamate. The HisF subunit catalyzes the cyclization activity that produces IGP and AICAR from PRFAR using the ammonia provided by the HisH subunit. This Staphylococcus saprophyticus subsp. saprophyticus (strain ATCC 15305 / DSM 20229 / NCIMB 8711 / NCTC 7292 / S-41) protein is Imidazole glycerol phosphate synthase subunit HisF.